The following is a 925-amino-acid chain: Translation initiation factor IF-2 (925 aa).

The interval P190 to V329 is disordered. Pro residues-rich tracts occupy residues P199–A209, P217–R238, and R279–Q288. The span at T289–G307 shows a compositional bias: low complexity. Residues R320–V329 show a composition bias toward basic and acidic residues. A tr-type G domain is found at V417 to E589. The segment at G426–T433 is G1. Position 426–433 (G426–T433) interacts with GTP. The tract at residues G451–H455 is G2. Residues D476–G479 are G3. Residues D476–H480 and N530–D533 each bind GTP. The interval N530–D533 is G4. A G5 region spans residues S566–K568.

Belongs to the TRAFAC class translation factor GTPase superfamily. Classic translation factor GTPase family. IF-2 subfamily.

Its subcellular location is the cytoplasm. One of the essential components for the initiation of protein synthesis. Protects formylmethionyl-tRNA from spontaneous hydrolysis and promotes its binding to the 30S ribosomal subunits. Also involved in the hydrolysis of GTP during the formation of the 70S ribosomal complex. In Gloeobacter violaceus (strain ATCC 29082 / PCC 7421), this protein is Translation initiation factor IF-2.